Here is a 300-residue protein sequence, read N- to C-terminus: tRNA pseudouridine synthase A (300 aa).

The active-site Nucleophile is the Asp-67. Residue Tyr-125 participates in substrate binding.

The protein belongs to the tRNA pseudouridine synthase TruA family. Homodimer.

It catalyses the reaction uridine(38/39/40) in tRNA = pseudouridine(38/39/40) in tRNA. In terms of biological role, formation of pseudouridine at positions 38, 39 and 40 in the anticodon stem and loop of transfer RNAs. The sequence is that of tRNA pseudouridine synthase A from Synechococcus sp. (strain CC9902).